The chain runs to 217 residues: Very-long-chain (3R)-3-hydroxyacyl-CoA dehydratase PHS1 (217 aa).

Over 1–11 (MSKKLASPLSF) the chain is Cytoplasmic. Residues 12–29 (LPLYNLLSAVGWSYLLYL) form a helical membrane-spanning segment. The Lumenal segment spans residues 30-47 (VISLYPKVGQPAFFYQTK). The chain crosses the membrane as a helical span at residues 48 to 66 (NVATLVQCGAIIEIINSFL). Over 67 to 76 (GVVRSPLLTT) the chain is Cytoplasmic. A helical membrane pass occupies residues 77–94 (VAQVSSRLLVVLGIFQLL). The Lumenal segment spans residues 95–99 (PNTSG). Residues 100-117 (VQSVVYISLLLAWSITEI) form a helical membrane-spanning segment. Residues 118–142 (VRYLYYFFMLVFKNGAPKILILLRY) lie on the Cytoplasmic side of the membrane. Residues 143–160 (NLFWILYPTGVASELRII) traverse the membrane as a helical segment. Catalysis depends on residues tyrosine 149 and glutamate 156. The Lumenal segment spans residues 161-178 (YCALNAAESQYSLLYKRI). A helical transmembrane segment spans residues 179-196 (LIAAMLAYIPGFPMLFLH). Topologically, residues 197–217 (MVAQRKKVMKSLRSSFGKKLI) are cytoplasmic. An Endoplasmic reticulum retention signal motif is present at residues 214–217 (KKLI).

The protein belongs to the very long-chain fatty acids dehydratase HACD family.

The protein localises to the endoplasmic reticulum membrane. It localises to the vacuole membrane. The catalysed reaction is a very-long-chain (3R)-3-hydroxyacyl-CoA = a very-long-chain (2E)-enoyl-CoA + H2O. The enzyme catalyses (3R)-hydroxyeicosanoyl-CoA = (2E)-eicosenoyl-CoA + H2O. It catalyses the reaction (3R)-hydroxydocosanoyl-CoA = (2E)-docosenoyl-CoA + H2O. It carries out the reaction (3R)-hydroxyoctadecanoyl-CoA = (2E)-octadecenoyl-CoA + H2O. The catalysed reaction is (3R)-hydroxytetracosanoyl-CoA = (2E)-tetracosenoyl-CoA + H2O. The enzyme catalyses (3R)-hydroxyhexacosanoyl-CoA = (2E)-hexacosenoyl-CoA + H2O. It catalyses the reaction (3R)-hydroxyhexadecanoyl-CoA = (2E)-hexadecenoyl-CoA + H2O. The protein operates within lipid metabolism; fatty acid biosynthesis. Catalyzes the third of the four reactions of the long-chain fatty acids elongation cycle. This endoplasmic reticulum-bound enzymatic process, allows the addition of two carbons to the chain of long- and very long-chain fatty acids/VLCFAs per cycle. This enzyme catalyzes the dehydration of the 3-hydroxyacyl-CoA intermediate into trans-2,3-enoyl-CoA, within each cycle of fatty acid elongation. Thereby, it participates in the production of VLCFAs of different chain lengths that are involved in multiple biological processes as precursors of membrane lipids and lipid mediators. This is Very-long-chain (3R)-3-hydroxyacyl-CoA dehydratase PHS1 (PHS1) from Saccharomyces cerevisiae (strain ATCC 204508 / S288c) (Baker's yeast).